The following is a 103-amino-acid chain: N(4)-acetylcytidine amidohydrolase (103 aa).

The region spanning 6–100 (ITFFQRFQED…AEDRFYVIEF (95 aa)) is the ASCH domain. Catalysis depends on Lys21, which acts as the Proton acceptor. Catalysis depends on Thr24, which acts as the Nucleophile. Glu74 (proton donor) is an active-site residue.

Belongs to the N(4)-acetylcytidine amidohydrolase family.

It catalyses the reaction N(4)-acetylcytidine + H2O = cytidine + acetate + H(+). The catalysed reaction is N(4)-acetyl-2'-deoxycytidine + H2O = 2'-deoxycytidine + acetate + H(+). It carries out the reaction N(4)-acetylcytosine + H2O = cytosine + acetate + H(+). In terms of biological role, catalyzes the hydrolysis of N(4)-acetylcytidine (ac4C). The protein is N(4)-acetylcytidine amidohydrolase of Klebsiella pneumoniae (strain 342).